The following is an 83-amino-acid chain: Subtilisin-chymotrypsin inhibitor CI-1A (83 aa).

Residues 1–24 are disordered; sequence MSSMEGSVLKYPEPTEGSIGASSA.

It belongs to the protease inhibitor I13 (potato type I serine protease inhibitor) family.

Inhibits both subtilisin and chymotrypsin. This chain is Subtilisin-chymotrypsin inhibitor CI-1A, found in Hordeum vulgare (Barley).